A 306-amino-acid chain; its full sequence is Probable thioesterase atnL (306 aa).

Belongs to the lcsJ thioesterase family.

In terms of biological role, part of the gene cluster that mediates the biosynthesis of aspercryptins, linear lipopeptides built from six amino acids including 2 highly unusual and nonproteogenic amino acids, 2-amino-octanoic acid (2aoa) and 2-amino-dodecanol (2adol). The core structure of aspercryptins is as follows: Ser/Ala-Thr-Ile/Val-2aoa-Asn-2adol. The first step of aspercryptin biosynthesis is the generation of the fatty acid precursors, octanoic and dodecanoic acids, by the FAS subunits atnF and atnM. The fatty acid precursors are likely transformed into the corresponding alpha-amino fatty acids in three steps. First, they are hydroxylated by the cytochrome P450 monooxygenase atnE, then oxidized to the corresponding alpha-keto acids by the NAD(P)-dependent oxidoreductase atnD, and finally converted to the alpha-amino fatty acids by the PLP-dependent aminotransferases atnH or atnJ. the alpha-amino fatty acids, 2-amino-octanoic and 2-amino-dodecanoic acids, are recognized, activated, and covalently tethered to the NRPS atnA by its fourth and sixth adenylation domains. The second module of atnA is the Thr module and contains an epimerase (E) domain responsible for the epimerization of Thr to D-allo-Thr. Additionally, despite atnA having only one epimerase domain, the first amino acid of aspercryptin A1 is D-Ser, suggesting that serine is either loaded directly as D-Ser on the first module or that the epimerase domain in the threonine module epimerizes both L-Ser and L-Thr. After condensation of the hexapeptide of aspercryptin, the C-terminal reductase (TE) domain might be involved in the reductive release and production of the aldehyde hexapeptide. Further reduction would generate aspercryptins. The variety of aspercryptins produced reflects the flexibility of the atnA NRPS, allowing incorporation of alanine instead of serine, valine for isoleucine, and a C10 fatty amino alcohol instead of the C12 version. AtnB seems to be involved in the selectivity for Ile versus Val by the third module. Moreover, type B, C and D aspercryptins have an additional N-terminal cichorine, acetyl and propionyl group respectively. The protein is Probable thioesterase atnL of Emericella nidulans (strain FGSC A4 / ATCC 38163 / CBS 112.46 / NRRL 194 / M139) (Aspergillus nidulans).